The primary structure comprises 119 residues: Phosphoribosyl-AMP cyclohydrolase (119 aa).

Residue D77 participates in Mg(2+) binding. Zn(2+) is bound at residue C78. Mg(2+)-binding residues include D79 and D81. C94 and C101 together coordinate Zn(2+).

Belongs to the PRA-CH family. As to quaternary structure, homodimer. It depends on Mg(2+) as a cofactor. Zn(2+) serves as cofactor.

It is found in the cytoplasm. It catalyses the reaction 1-(5-phospho-beta-D-ribosyl)-5'-AMP + H2O = 1-(5-phospho-beta-D-ribosyl)-5-[(5-phospho-beta-D-ribosylamino)methylideneamino]imidazole-4-carboxamide. Its pathway is amino-acid biosynthesis; L-histidine biosynthesis; L-histidine from 5-phospho-alpha-D-ribose 1-diphosphate: step 3/9. Its function is as follows. Catalyzes the hydrolysis of the adenine ring of phosphoribosyl-AMP. The sequence is that of Phosphoribosyl-AMP cyclohydrolase from Cereibacter sphaeroides (strain ATCC 17029 / ATH 2.4.9) (Rhodobacter sphaeroides).